Reading from the N-terminus, the 726-residue chain is Catalase-peroxidase (726 aa).

A disordered region spans residues 1–25; sequence MDAKTDDSAGKCPFTGGGRRGHRNR. The tryptophyl-tyrosyl-methioninium (Trp-Tyr) (with M-244) cross-link spans 96–218; the sequence is WHSAGTYRIT…LAAVQMGLIY (123 aa). Histidine 97 (proton acceptor) is an active-site residue. A cross-link (tryptophyl-tyrosyl-methioninium (Tyr-Met) (with W-96)) is located at residues 218–244; sequence YVNPEGPNGNPDPVAAAKDIRETFYRM. Position 259 (histidine 259) interacts with heme b.

It belongs to the peroxidase family. Peroxidase/catalase subfamily. In terms of assembly, homodimer or homotetramer. Requires heme b as cofactor. In terms of processing, formation of the three residue Trp-Tyr-Met cross-link is important for the catalase, but not the peroxidase activity of the enzyme.

It carries out the reaction H2O2 + AH2 = A + 2 H2O. It catalyses the reaction 2 H2O2 = O2 + 2 H2O. Functionally, bifunctional enzyme with both catalase and broad-spectrum peroxidase activity. The protein is Catalase-peroxidase of Chelativorans sp. (strain BNC1).